A 97-amino-acid polypeptide reads, in one-letter code: Protein RESPONSE TO LOW SULFUR 3 (97 aa).

Positions 8–42 (VTVAAEEVEELRRRNGELEREMEEMKKEMVQLWRR) form a coiled coil.

The chain is Protein RESPONSE TO LOW SULFUR 3 from Arabidopsis thaliana (Mouse-ear cress).